The sequence spans 158 residues: Mitotic-spindle organizing protein 2 (158 aa).

Ser34 carries the phosphoserine modification. The interval 81 to 158 (AGQRVASDSQ…PGRSPPRSGT (78 aa)) is disordered. A compositionally biased stretch (gly residues) spans 110–119 (KGGGALGGGP). Ser152 is subject to Phosphoserine.

Belongs to the MOZART2 family. In terms of assembly, associates with the gamma-tubulin ring complex (gTuRC) consisting of TUBGCP2, TUBGCP3, TUBGCP4, TUBGCP5 and TUBGCP6 and gamma-tubulin TUBG1 or TUBG2; within the complex, interacts with TUBGCP2; the interaction plays a role in gTuRC activation.

The protein localises to the cytoplasm. It is found in the cytoskeleton. The protein resides in the microtubule organizing center. It localises to the centrosome. Its subcellular location is the spindle. Functionally, required for the recruitment and the assembly of the gamma-tubulin ring complex (gTuRC) at the centrosome. The gTuRC regulates the minus-end nucleation of alpha-beta tubulin heterodimers that grow into microtubule protafilaments, a critical step in centrosome duplication and spindle formation. The sequence is that of Mitotic-spindle organizing protein 2 (MZT2) from Bos taurus (Bovine).